Here is a 504-residue protein sequence, read N- to C-terminus: CaM kinase-like vesicle-associated protein (504 aa).

The region spanning 24–286 (YDLGQVVKTE…AEEAISHEWI (263 aa)) is the Protein kinase domain. The segment at 378 to 504 (KSDDMASADR…AQESQRVETS (127 aa)) is disordered. Position 384 is a phosphoserine (Ser384). Residues 390 to 431 (TPATDGSATPATDGSVTPATDGSITPATDGSVTPATDRSATP) are compositionally biased toward polar residues. Thr438 and Thr462 each carry phosphothreonine. The segment covering 445-470 (TVPAAQSSAAPAAKAAATPEPAVAQP) has biased composition (low complexity).

It belongs to the protein kinase superfamily. CAMK Ser/Thr protein kinase family. As to quaternary structure, interacts with calmodulin, in the presence of calcium. Requires Ca(2+) as cofactor. Expressed in brain and weakly in eye. Not detected in liver, kidney, spleen, thymus, bladder, aorta, lung, intestine, esophagus, stomach, skeletal muscle, heart, diaphragm, uterus, tail skin, submaxillary gland, prostate, ear, epididymis, placenta, pancreas, ovary, testis, adrenal gland, parathyroid gland, thyroid gland, pineal gland, pituitary and sciatic nerve. In adult hippocampus, predominantly expressed in caudate nucleus, cortex, hypothalamus, olfactory bulb, and midbrain and faintly in pons, brainstem and spinal cord.

The protein localises to the cell membrane. It is found in the cytoplasmic vesicle membrane. Has no detectable kinase activity in vitro. The protein is CaM kinase-like vesicle-associated protein (Camkv) of Rattus norvegicus (Rat).